Consider the following 237-residue polypeptide: Class B acid phosphatase (237 aa).

The signal sequence occupies residues 1-23; it reads MKKITLALSAVCLLFTLNHSANA. Aspartate 69 serves as the catalytic Nucleophile. The Mg(2+) site is built by aspartate 69 and aspartate 71. Aspartate 71 acts as the Proton donor in catalysis. Substrate-binding positions include 137–138 and lysine 177; that span reads TG. Aspartate 192 provides a ligand contact to Mg(2+).

It belongs to the class B bacterial acid phosphatase family. Homotetramer. Mg(2+) serves as cofactor.

The protein resides in the periplasm. The enzyme catalyses a phosphate monoester + H2O = an alcohol + phosphate. Nucleosides, and particularly 2'-deoxyribonucleosides, are potent inhibitors of the phosphatase activity. The phosphatase activity is also inhibited by inorganic phosphate and EDTA in vitro. Dephosphorylates several organic phosphate monoesters such as 3'-UMP, 5'-UMP and pNPP. Also has a phosphotransferase activity catalyzing the transfer of low-energy phosphate groups from organic phosphate monoesters to free hydroxyl groups of various organic compounds such as the 2'-, 3-, or 5'-hydroxyls of nucleosides and nucleotides. Also displays significant phosphomutase activity since it is able to catalyze the transfer of the phosphate group of 3'-AMP from the 3'-position both to the 2'- and 5'-positions. One of the physiological functions of the phosphohydrolytic activity of the enzyme is believed to be the scavenging of organic phosphate esters that otherwise cannot pass the cytoplasmic membrane. The protein is Class B acid phosphatase (aphA) of Salmonella typhimurium (strain LT2 / SGSC1412 / ATCC 700720).